The following is a 369-amino-acid chain: Cobalt-precorrin-5B C(1)-methyltransferase (369 aa).

The protein belongs to the CbiD family.

It catalyses the reaction Co-precorrin-5B + S-adenosyl-L-methionine = Co-precorrin-6A + S-adenosyl-L-homocysteine. It participates in cofactor biosynthesis; adenosylcobalamin biosynthesis; cob(II)yrinate a,c-diamide from sirohydrochlorin (anaerobic route): step 6/10. In terms of biological role, catalyzes the methylation of C-1 in cobalt-precorrin-5B to form cobalt-precorrin-6A. The polypeptide is Cobalt-precorrin-5B C(1)-methyltransferase (Leptospira borgpetersenii serovar Hardjo-bovis (strain JB197)).